A 276-amino-acid chain; its full sequence is Probable ribose-5-phosphate isomerase 3, chloroplastic (276 aa).

The N-terminal 39 residues, 1–39 (MASLSFVSSSHLTLRTPSIALRSTGSSPRTSVSFSVKAQ), are a transit peptide targeting the chloroplast. Ser40 carries the N-acetylserine modification. Ser108 is modified (phosphoserine).

Belongs to the ribose 5-phosphate isomerase family. Phosphorylated by SRK2C.

Its subcellular location is the plastid. The protein localises to the chloroplast. The catalysed reaction is aldehydo-D-ribose 5-phosphate = D-ribulose 5-phosphate. The protein operates within carbohydrate degradation; pentose phosphate pathway; D-ribose 5-phosphate from D-ribulose 5-phosphate (non-oxidative stage): step 1/1. Functionally, catalyzes the reversible conversion of ribose-5-phosphate to ribulose 5-phosphate. This chain is Probable ribose-5-phosphate isomerase 3, chloroplastic (RPI3), found in Arabidopsis thaliana (Mouse-ear cress).